The sequence spans 360 residues: 3-dehydroquinate synthase (360 aa).

NAD(+) is bound by residues Asp72–Lys77, Gly106–Asp110, Thr130–Thr131, Lys143, Lys152, and Thr170–Thr173. Positions 185, 248, and 265 each coordinate Zn(2+).

It belongs to the sugar phosphate cyclases superfamily. Dehydroquinate synthase family. Co(2+) is required as a cofactor. It depends on Zn(2+) as a cofactor. NAD(+) serves as cofactor.

The protein resides in the cytoplasm. The catalysed reaction is 7-phospho-2-dehydro-3-deoxy-D-arabino-heptonate = 3-dehydroquinate + phosphate. It participates in metabolic intermediate biosynthesis; chorismate biosynthesis; chorismate from D-erythrose 4-phosphate and phosphoenolpyruvate: step 2/7. Its function is as follows. Catalyzes the conversion of 3-deoxy-D-arabino-heptulosonate 7-phosphate (DAHP) to dehydroquinate (DHQ). This chain is 3-dehydroquinate synthase, found in Geobacter metallireducens (strain ATCC 53774 / DSM 7210 / GS-15).